Consider the following 414-residue polypeptide: Esterase FrsA (414 aa).

Belongs to the FrsA family.

The enzyme catalyses a carboxylic ester + H2O = an alcohol + a carboxylate + H(+). Functionally, catalyzes the hydrolysis of esters. The sequence is that of Esterase FrsA from Klebsiella pneumoniae subsp. pneumoniae (strain ATCC 700721 / MGH 78578).